A 202-amino-acid chain; its full sequence is Recombination protein RecR (202 aa).

The C4-type zinc finger occupies 59–74 (CSVCFHLSAEPVCEIC). The Toprim domain occupies 82–176 (HTICVVADSR…KVTRIAFGLP (95 aa)).

The protein belongs to the RecR family.

Its function is as follows. May play a role in DNA repair. It seems to be involved in an RecBC-independent recombinational process of DNA repair. It may act with RecF and RecO. In Thermosynechococcus vestitus (strain NIES-2133 / IAM M-273 / BP-1), this protein is Recombination protein RecR.